A 278-amino-acid chain; its full sequence is 4-deoxy-L-threo-5-hexosulose-uronate ketol-isomerase (278 aa).

Zn(2+) contacts are provided by H196, H198, E203, and H245.

It belongs to the KduI family. Requires Zn(2+) as cofactor.

The catalysed reaction is 5-dehydro-4-deoxy-D-glucuronate = 3-deoxy-D-glycero-2,5-hexodiulosonate. It functions in the pathway glycan metabolism; pectin degradation; 2-dehydro-3-deoxy-D-gluconate from pectin: step 4/5. In terms of biological role, catalyzes the isomerization of 5-dehydro-4-deoxy-D-glucuronate to 3-deoxy-D-glycero-2,5-hexodiulosonate. In Paraburkholderia phytofirmans (strain DSM 17436 / LMG 22146 / PsJN) (Burkholderia phytofirmans), this protein is 4-deoxy-L-threo-5-hexosulose-uronate ketol-isomerase.